The primary structure comprises 304 residues: Methionyl-tRNA formyltransferase (304 aa).

107–110 is a binding site for (6S)-5,6,7,8-tetrahydrofolate; it reads SLLP.

The protein belongs to the Fmt family.

The enzyme catalyses L-methionyl-tRNA(fMet) + (6R)-10-formyltetrahydrofolate = N-formyl-L-methionyl-tRNA(fMet) + (6S)-5,6,7,8-tetrahydrofolate + H(+). Attaches a formyl group to the free amino group of methionyl-tRNA(fMet). The formyl group appears to play a dual role in the initiator identity of N-formylmethionyl-tRNA by promoting its recognition by IF2 and preventing the misappropriation of this tRNA by the elongation apparatus. This Coprothermobacter proteolyticus (strain ATCC 35245 / DSM 5265 / OCM 4 / BT) protein is Methionyl-tRNA formyltransferase.